The sequence spans 384 residues: GTPase Obg (384 aa).

Positions 1–159 (MKFIDEAKIE…RSLQLELKVL (159 aa)) constitute an Obg domain. The disordered stretch occupies residues 20 to 46 (ATSFRREKFVPRGGPDGGDGGKGGSVW). Residues 33 to 43 (GPDGGDGGKGG) are compositionally biased toward gly residues. The 189-residue stretch at 160-348 (ADVGLLGMPN…LVHQINQYLT (189 aa)) folds into the OBG-type G domain. GTP-binding positions include 166–173 (GMPNAGKS), 191–195 (FTTLH), 213–216 (DIPG), 284–287 (NKLD), and 329–331 (SAL). Ser-173 and Thr-193 together coordinate Mg(2+).

Belongs to the TRAFAC class OBG-HflX-like GTPase superfamily. OBG GTPase family. In terms of assembly, monomer. It depends on Mg(2+) as a cofactor.

It is found in the cytoplasm. In terms of biological role, an essential GTPase which binds GTP, GDP and possibly (p)ppGpp with moderate affinity, with high nucleotide exchange rates and a fairly low GTP hydrolysis rate. Plays a role in control of the cell cycle, stress response, ribosome biogenesis and in those bacteria that undergo differentiation, in morphogenesis control. The sequence is that of GTPase Obg from Neisseria meningitidis serogroup C / serotype 2a (strain ATCC 700532 / DSM 15464 / FAM18).